Reading from the N-terminus, the 160-residue chain is Cytochrome b6-f complex subunit 4 (160 aa).

3 helical membrane passes run 36-56 (IFYMFPVVIFGTFAGVIGLAV), 96-116 (LGVLLMAAVPAGLITVPFIKI), and 131-151 (TVFLVGTVAAIWLGIGAALPI).

Belongs to the cytochrome b family. PetD subfamily. The 4 large subunits of the cytochrome b6-f complex are cytochrome b6, subunit IV (17 kDa polypeptide, petD), cytochrome f and the Rieske protein, while the 4 small subunits are petG, petL, petM and petN. The complex functions as a dimer.

Its subcellular location is the plastid. The protein localises to the chloroplast thylakoid membrane. Its function is as follows. Component of the cytochrome b6-f complex, which mediates electron transfer between photosystem II (PSII) and photosystem I (PSI), cyclic electron flow around PSI, and state transitions. This Auxenochlorella protothecoides (Green microalga) protein is Cytochrome b6-f complex subunit 4.